Here is a 150-residue protein sequence, read N- to C-terminus: Ribosome maturation factor RimP (150 aa).

Belongs to the RimP family.

It is found in the cytoplasm. Its function is as follows. Required for maturation of 30S ribosomal subunits. The sequence is that of Ribosome maturation factor RimP from Hahella chejuensis (strain KCTC 2396).